The primary structure comprises 250 residues: Nuclear transcription factor Y subunit C-4 (250 aa).

Residues 219 to 250 (GIAYGGQQGHPGYLWQDPQEQQEEPPAEQQSD) are disordered. The segment covering 238-250 (EQQEEPPAEQQSD) has biased composition (acidic residues).

It belongs to the NFYC/HAP5 subunit family. Heterotrimeric transcription factor composed of three components, NF-YA, NF-YB and NF-YC. NF-YB and NF-YC must interact and dimerize for NF-YA association and DNA binding. Interacts with NFYB2. Interacts with NFYB8, NFYB10 and HD5/NFYB11.

It localises to the nucleus. The protein resides in the cytoplasm. In terms of biological role, probable transcription factor involved in the regulation of flowering time under long day (LD) conditions. Functions as a repressor of flowering, independently of HD1 and GHD7. Controls flowering time by negatively regulating the expression of EHD1 and HD3A. Component of the NF-Y/HAP transcription factor complex. This chain is Nuclear transcription factor Y subunit C-4, found in Oryza sativa subsp. japonica (Rice).